We begin with the raw amino-acid sequence, 349 residues long: uncharacterized protein (349 aa).

Ser-2 is modified (phosphoserine).

This is an uncharacterized protein from Saccharomyces cerevisiae (strain ATCC 204508 / S288c) (Baker's yeast).